The sequence spans 329 residues: NADH-quinone oxidoreductase subunit H (329 aa).

A run of 8 helical transmembrane segments spans residues 11–31, 81–101, 114–134, 154–174, 187–207, 238–258, 270–290, and 309–329; these read IVVA…CGAL, LIFT…FAVV, IGLL…LFAG, ISYE…TGSF, TWFI…GVAV, FFVG…TLFF, QLSF…FILL, and FCLP…LAAQ.

The protein belongs to the complex I subunit 1 family. NDH-1 is composed of 13 different subunits. Subunits NuoA, H, J, K, L, M, N constitute the membrane sector of the complex.

Its subcellular location is the cell inner membrane. The catalysed reaction is a quinone + NADH + 5 H(+)(in) = a quinol + NAD(+) + 4 H(+)(out). Functionally, NDH-1 shuttles electrons from NADH, via FMN and iron-sulfur (Fe-S) centers, to quinones in the respiratory chain. The immediate electron acceptor for the enzyme in this species is believed to be ubiquinone. Couples the redox reaction to proton translocation (for every two electrons transferred, four hydrogen ions are translocated across the cytoplasmic membrane), and thus conserves the redox energy in a proton gradient. This subunit may bind ubiquinone. The chain is NADH-quinone oxidoreductase subunit H from Azotobacter vinelandii (strain DJ / ATCC BAA-1303).